We begin with the raw amino-acid sequence, 427 residues long: 3-isopropylmalate dehydratase large subunit (427 aa).

The [4Fe-4S] cluster site is built by C308, C368, and C371.

Belongs to the aconitase/IPM isomerase family. LeuC type 2 subfamily. As to quaternary structure, heterodimer of LeuC and LeuD. Requires [4Fe-4S] cluster as cofactor.

The enzyme catalyses (2R,3S)-3-isopropylmalate = (2S)-2-isopropylmalate. Its pathway is amino-acid biosynthesis; L-leucine biosynthesis; L-leucine from 3-methyl-2-oxobutanoate: step 2/4. Functionally, catalyzes the isomerization between 2-isopropylmalate and 3-isopropylmalate, via the formation of 2-isopropylmaleate. This chain is 3-isopropylmalate dehydratase large subunit, found in Geotalea uraniireducens (strain Rf4) (Geobacter uraniireducens).